A 547-amino-acid polypeptide reads, in one-letter code: Membrane protein insertase YidC (547 aa).

A helical membrane pass occupies residues 8–28 (LRLILAIALSFLFIALYSYFF). Residues 37-50 (QTTKQETTNNHTAT) show a composition bias toward low complexity. Positions 37-62 (QTTKQETTNNHTATSPNAPNAQHFST) are disordered. Residues 51 to 62 (SPNAPNAQHFST) are compositionally biased toward polar residues. Transmembrane regions (helical) follow at residues 325–345 (VIEYGLITFFAKGVFVLLDYL), 348–368 (FVGNWGWAIILLTIIVRIILY), 414–434 (GANPLGGCLPLILQIPVFFAI), 449–469 (WILWIHDLSIMDPYFILPLLM), and 495–515 (LLPLLFTIFLITFPAGLVLYW).

It belongs to the OXA1/ALB3/YidC family. Type 1 subfamily. As to quaternary structure, interacts with the Sec translocase complex via SecD. Specifically interacts with transmembrane segments of nascent integral membrane proteins during membrane integration.

It is found in the cell inner membrane. Its function is as follows. Required for the insertion and/or proper folding and/or complex formation of integral membrane proteins into the membrane. Involved in integration of membrane proteins that insert both dependently and independently of the Sec translocase complex, as well as at least some lipoproteins. Aids folding of multispanning membrane proteins. In Helicobacter pylori (strain ATCC 700392 / 26695) (Campylobacter pylori), this protein is Membrane protein insertase YidC.